Here is a 1824-residue protein sequence, read N- to C-terminus: Treslin (1824 aa).

10 disordered regions span residues 542-572 (EFYQ…QKMK), 590-622 (AQKT…KPGL), 907-973 (SPSK…SGES), 1001-1035 (RHSS…KGKF), 1098-1117 (AVGC…VGDN), 1189-1221 (VPEN…SPEE), 1293-1388 (PFCN…DDDK), 1459-1518 (FEGK…QSSP), 1617-1650 (TPTH…NLNS), and 1803-1824 (PLCQ…KLLD). Residues 546–555 (SSTAGSSGSL) show a composition bias toward low complexity. The segment covering 562-572 (TQCTPVRQKMK) has biased composition (polar residues). Basic and acidic residues predominate over residues 605–619 (GTEKGGKKSSGDRTK). Polar residues predominate over residues 907–921 (SPSKKSKMPRSQSVS). Residues 932 to 952 (SDVDNDDRHTLLTKKVSETPL) show a composition bias toward basic and acidic residues. Polar residues-rich tracts occupy residues 1005-1014 (VFYSSSQPRS) and 1103-1114 (TPQSPRTPNRTV). Residues 1319–1345 (RSGNTPVKESCSPSSNSQGITGTSPSP) show a composition bias toward polar residues. A compositionally biased stretch (low complexity) spans 1347–1370 (KSLSSAVAKSSPSPSFGPSRSGVG). A compositionally biased stretch (polar residues) spans 1462–1472 (KQTTSTGTPLT). Positions 1480-1490 (TPDRRQREAEA) are enriched in basic and acidic residues. Composition is skewed to polar residues over residues 1617-1629 (TPTH…QSPL) and 1636-1650 (SPQS…NLNS). Positions 1807–1824 (PRRRRTPSRTYSRKKLLD) are enriched in basic residues.

Belongs to the treslin family. In terms of assembly, interacts with topbp1 (via BRCT domains); interaction takes place in a cdk2-dependent manner. Component of the replisome complex.

It localises to the nucleus. In terms of biological role, regulator of DNA replication and S/M and G2/M checkpoints. Regulates the triggering of DNA replication initiation via its interaction with topbp1 by participating in cdk2-mediated loading of cdc45l onto replication origins. Required for the transition from pre-replication complex (pre-RC) to pre-initiation complex (pre-IC). Required to prevent mitotic entry after treatment with ionizing radiation. This Danio rerio (Zebrafish) protein is Treslin (ticrr).